Reading from the N-terminus, the 217-residue chain is External core antigen (217 aa).

The signal sequence occupies residues 1–20; sequence MYLFHLCLVFACVSCPTVQA. Residues 26-28 form an HBEAG region; sequence GWL. Over residues 181–210 the composition is skewed to basic residues; sequence RRGSARVVRSPRRRTPSPRRRRSQSPRRRP. Residues 181–217 are disordered; it reads RRGSARVVRSPRRRTPSPRRRRSQSPRRRPQSPASNC. Residues 190–196 form a 1; half-length repeat; that stretch reads SPRRRTP. Positions 190–211 are 3 X 8 AA approximate repeats of S-P-R-R-R-R-[PS]-Q; that stretch reads SPRRRTPSPRRRRSQSPRRRPQ. The propeptide occupies 190–217; that stretch reads SPRRRTPSPRRRRSQSPRRRPQSPASNC. Tandem repeats lie at residues 197 to 204 and 205 to 211.

The protein belongs to the orthohepadnavirus precore antigen family. In terms of assembly, homodimerizes. Post-translationally, phosphorylated. Cleaved by host furin.

The protein resides in the secreted. It is found in the host nucleus. Its function is as follows. May regulate immune response to the intracellular capsid in acting as a T-cell tolerogen, by having an immunoregulatory effect which prevents destruction of infected cells by cytotoxic T-cells. This immune regulation may predispose to chronicity during perinatal infections and prevent severe liver injury during adult infections. This chain is External core antigen, found in Urocitellus parryii kennicottii (ASHV).